A 459-amino-acid polypeptide reads, in one-letter code: Neuronal acetylcholine receptor subunit beta-2 (459 aa).

Over 1 to 203 (LRSDFLLGPE…ITYDFVIKRK (203 aa)) the chain is Extracellular. Asparagine 21 and asparagine 138 each carry an N-linked (GlcNAc...) asparagine glycan. Cysteine 125 and cysteine 139 are disulfide-bonded. Residues 204-228 (PLFYTINLIIPCVLITSLAILVFYL) form a helical membrane-spanning segment. Topologically, residues 229–235 (PSDCGEK) are cytoplasmic. A helical membrane pass occupies residues 236–254 (VTLCMSVLLALTVFLLLIS). Residues 255 to 269 (KIVPPTSLAVPLIGK) lie on the Extracellular side of the membrane. A helical membrane pass occupies residues 270 to 291 (YLMFTMVLVTFSIVTSVCVLNV). Residues 292–421 (HHRSPSTHYM…WKYVAMVIDR (130 aa)) lie on the Cytoplasmic side of the membrane. A helical membrane pass occupies residues 422 to 440 (LFLWIFILVCVVGTLGLFV).

The protein belongs to the ligand-gated ion channel (TC 1.A.9) family. Acetylcholine receptor (TC 1.A.9.1) subfamily. Beta-2/CHRNB2 sub-subfamily. Neuronal AChR is a heteropentamer composed of two different types of subunits: alpha and beta. CHRNB2/Beta-2 subunit can be combined to CHRNA2/alpha-2, CHRNA3/alpha-3 or CHRNA4/alpha-4, CHRNA5/alpha-5, CHRNA6/alpha-6 and CHRNB3/beta-3 to give rise to functional receptors.

The protein localises to the synaptic cell membrane. It localises to the cell membrane. It carries out the reaction Ca(2+)(in) = Ca(2+)(out). The catalysed reaction is K(+)(in) = K(+)(out). It catalyses the reaction Na(+)(in) = Na(+)(out). Its activity is regulated as follows. Activated by a myriad of ligands such as acetylcholine, cytisine, nicotine, choline and epibatidine. nAChR activity is inhibited by the antagonist alpha-conotoxins BuIA, PnIA, PnIC, GID and MII, small disulfide-constrained peptides from cone snails. Component of neuronal acetylcholine receptors (nAChRs) that function as pentameric, ligand-gated cation channels with high calcium permeability among other activities. nAChRs are excitatory neurotrasnmitter receptors formed by a collection of nAChR subunits known to mediate synaptic transmission in the nervous system and the neuromuscular junction. Each nAchR subunit confers differential attributes to channel properties, including activation, deactivation and desensitization kinetics, pH sensitivity, cation permeability, and binding to allosteric modulators. CHRNB2 forms heteropentameric neuronal acetylcholine receptors with CHRNA2, CHRNA3, CHRNA4 and CHRNA6, as well as CHRNA5 and CHRNB3 as accesory subunits. In Carassius auratus (Goldfish), this protein is Neuronal acetylcholine receptor subunit beta-2 (chrnb2).